We begin with the raw amino-acid sequence, 312 residues long: Acetyl-coenzyme A carboxylase carboxyl transferase subunit alpha (312 aa).

The CoA carboxyltransferase C-terminal domain occupies 36–286 (NLEKEISKTY…ADYVKKSLNE (251 aa)).

Belongs to the AccA family. In terms of assembly, acetyl-CoA carboxylase is a heterohexamer composed of biotin carboxyl carrier protein (AccB), biotin carboxylase (AccC) and two subunits each of ACCase subunit alpha (AccA) and ACCase subunit beta (AccD).

The protein resides in the cytoplasm. It catalyses the reaction N(6)-carboxybiotinyl-L-lysyl-[protein] + acetyl-CoA = N(6)-biotinyl-L-lysyl-[protein] + malonyl-CoA. It functions in the pathway lipid metabolism; malonyl-CoA biosynthesis; malonyl-CoA from acetyl-CoA: step 1/1. Functionally, component of the acetyl coenzyme A carboxylase (ACC) complex. First, biotin carboxylase catalyzes the carboxylation of biotin on its carrier protein (BCCP) and then the CO(2) group is transferred by the carboxyltransferase to acetyl-CoA to form malonyl-CoA. In Campylobacter jejuni subsp. jejuni serotype O:23/36 (strain 81-176), this protein is Acetyl-coenzyme A carboxylase carboxyl transferase subunit alpha.